Here is a 359-residue protein sequence, read N- to C-terminus: NF-kappa-B inhibitor beta (359 aa).

2 positions are modified to phosphoserine; by RPS6KA1: Ser19 and Ser23. ANK repeat units lie at residues 57-86, 93-122, 126-155, 206-235, 240-269, and 273-302; these read DGDT…GTEY, LGQT…GVLV, GGHT…SHPR, DGHT…DLNK, CGRT…DPTA, and GGRT…PEPE. Residues 153-192 form a disordered region; sequence HPRDASDTYLTQSQDHTPDTSHAPVATDPQPNPGNEEELR. Positions 298–308 are enriched in basic and acidic residues; sequence APEPEDKDDKL. The segment at 298–359 is disordered; sequence APEPEDKDDK…KPLPDDPNPA (62 aa). Phosphoserine is present on Ser318. Positions 318 to 331 are enriched in acidic residues; that stretch reads SDSDNRDEGDEYDD. A compositionally biased stretch (pro residues) spans 342–359; the sequence is QPPPSPAAKPLPDDPNPA.

Belongs to the NF-kappa-B inhibitor family. Interacts with THRB (via ligand-binding domain). Interacts with RELA and REL. Interacts with COMMD1. Interacts with inhibitor kappa B-interacting Ras-like NKIRAS1 and NKIRAS2. In terms of processing, phosphorylated by RPS6KA1; followed by degradation. Interaction with NKIRAS1 and NKIRAS2 probably prevents phosphorylation.

It localises to the cytoplasm. The protein localises to the nucleus. In terms of biological role, inhibits NF-kappa-B by complexing with and trapping it in the cytoplasm. However, the unphosphorylated form resynthesized after cell stimulation is able to bind NF-kappa-B allowing its transport to the nucleus and protecting it to further NFKBIA-dependent inactivation. Association with inhibitor kappa B-interacting NKIRAS1 and NKIRAS2 prevent its phosphorylation rendering it more resistant to degradation, explaining its slower degradation. This chain is NF-kappa-B inhibitor beta (Nfkbib), found in Rattus norvegicus (Rat).